Here is a 611-residue protein sequence, read N- to C-terminus: Fatty acid photodecarboxylase, chloroplastic (611 aa).

Residues 1–22 (MMLGPKTVTRGATKGAAPRSMA) form a disordered region. Residues 1–36 (MMLGPKTVTRGATKGAAPRSMAARRVGGARRLSVRA) constitute a chloroplast transit peptide. Residues 55–56 (TA), Glu76, Met125, Ser129, and 133–136 (NATL) contribute to the FAD site. Hexadecanoate contacts are provided by Cys392, Arg412, Tyr427, and Gln447. Gly582 serves as a coordination point for FAD.

This sequence belongs to the GMC oxidoreductase family. The cofactor is FAD.

The protein resides in the plastid. Its subcellular location is the chloroplast. It catalyses the reaction a long-chain fatty acid + hnu + H(+) = a long-chain alkane + CO2. The catalysed reaction is hnu + hexadecanoate + H(+) = pentadecane + CO2. Activated by blue light and repressed by red light. Its function is as follows. Catalyzes the decarboxylation of free fatty acids to n-alkanes or n-alkenes in response to blue light. Substrate preference is toward fatty acids with C17 or C18 chains. Saturated fatty acids are converted to alkanes, not alkenes. The decarboxylation is initiated through electron abstraction from the fatty acid by the photo-excited FAD. The chain is Fatty acid photodecarboxylase, chloroplastic from Chlamydomonas reinhardtii (Chlamydomonas smithii).